The sequence spans 399 residues: L-asparaginase-like protein GG20738 (399 aa).

An N-terminal signal peptide occupies residues 1 to 22 (MLAQSCCLRLLILLLLCKSTCS). Disulfide bonds link Cys90-Cys95, Cys189-Cys205, and Cys344-Cys371.

Belongs to the Ntn-hydrolase family.

The chain is L-asparaginase-like protein GG20738 from Drosophila erecta (Fruit fly).